Reading from the N-terminus, the 170-residue chain is Urease accessory protein UreE (170 aa).

It belongs to the UreE family.

It is found in the cytoplasm. Its function is as follows. Involved in urease metallocenter assembly. Binds nickel. Probably functions as a nickel donor during metallocenter assembly. This is Urease accessory protein UreE from Helicobacter pylori (strain HPAG1).